The following is a 265-amino-acid chain: Cell division protein DivIB (265 aa).

Over 1–33 (MRMELKMMGNVNKSNKTNEYILRRHKKKRKKKL) the chain is Cytoplasmic. A helical membrane pass occupies residues 34–54 (IIFSILLISILVTLCFKHPFF). The POTRA domain occupies 54–122 (FNVKIVEVKD…NKIVIHIKER (69 aa)). Residues 55–265 (NVKIVEVKDN…FKGNPVVFIK (211 aa)) are Extracellular-facing.

This sequence belongs to the FtsQ/DivIB family. DivIB subfamily.

The protein resides in the cell membrane. Functionally, cell division protein that may be involved in stabilizing or promoting the assembly of the division complex. This Clostridium tetani (strain Massachusetts / E88) protein is Cell division protein DivIB.